We begin with the raw amino-acid sequence, 210 residues long: Cyclin-U1-1 (210 aa).

The protein belongs to the cyclin family. Cyclin U/P subfamily. As to quaternary structure, interacts with CDKA-1. In terms of tissue distribution, expressed in roots and flowers. Expressed in the shoot apex, leaf primordia and young leaves.

The chain is Cyclin-U1-1 (CYCU1-1) from Arabidopsis thaliana (Mouse-ear cress).